The sequence spans 607 residues: CRS2-associated factor 2, chloroplastic (607 aa).

Residues 1–75 (MSPPPPQRPS…GNGGNPAFRA (75 aa)) are disordered. The transit peptide at 1 to 79 (MSPPPPQRPS…NPAFRAPHLR (79 aa)) directs the protein to the chloroplast. 2 consecutive CRM domains span residues 228–324 (EPLT…TRPR) and 346–442 (EGLT…YPKP). The tract at residues 482–505 (KMFELWTNAIESSVALMLDDAEVD) is CRS2 binding. The disordered stretch occupies residues 550-576 (TEDEPETGTLEPQQHEFTESSDVAEDD).

Interacts with CRS2 and RNA. Part of large ribonucleo-protein complexes that include group IIB introns, CRS2 and CAF2.

The protein resides in the plastid. It localises to the chloroplast stroma. Its function is as follows. Required for the splicing of group IIB introns in chloroplasts. Forms splicing particles with CRS2. Interacts with RNA and confers intron specificity of the splicing particles. This chain is CRS2-associated factor 2, chloroplastic, found in Oryza sativa subsp. japonica (Rice).